A 110-amino-acid chain; its full sequence is Cuticle protein 13 (110 aa).

The protein is Cuticle protein 13 of Limulus polyphemus (Atlantic horseshoe crab).